The primary structure comprises 311 residues: Methionyl-tRNA formyltransferase (311 aa).

112 to 115 serves as a coordination point for (6S)-5,6,7,8-tetrahydrofolate; that stretch reads SLLP.

The protein belongs to the Fmt family.

The enzyme catalyses L-methionyl-tRNA(fMet) + (6R)-10-formyltetrahydrofolate = N-formyl-L-methionyl-tRNA(fMet) + (6S)-5,6,7,8-tetrahydrofolate + H(+). Attaches a formyl group to the free amino group of methionyl-tRNA(fMet). The formyl group appears to play a dual role in the initiator identity of N-formylmethionyl-tRNA by promoting its recognition by IF2 and preventing the misappropriation of this tRNA by the elongation apparatus. This chain is Methionyl-tRNA formyltransferase, found in Sinorhizobium medicae (strain WSM419) (Ensifer medicae).